Here is a 317-residue protein sequence, read N- to C-terminus: ATP synthase gamma chain (317 aa).

Belongs to the ATPase gamma chain family. F-type ATPases have 2 components, CF(1) - the catalytic core - and CF(0) - the membrane proton channel. CF(1) has five subunits: alpha(3), beta(3), gamma(1), delta(1), epsilon(1). CF(0) has three main subunits: a, b and c.

The protein localises to the cellular thylakoid membrane. Its function is as follows. Produces ATP from ADP in the presence of a proton gradient across the membrane. The gamma chain is believed to be important in regulating ATPase activity and the flow of protons through the CF(0) complex. The protein is ATP synthase gamma chain of Acaryochloris marina (strain MBIC 11017).